The chain runs to 354 residues: MSAGGGRAFAWQVFPPMPTCRVYGTVAHQDGHLLVLGGCGRAGLPLDTAETLDMASHTWLALAPLPTARAGAAAVVLGKQVLVVGGVDEVQSPVAAVEAFLMDEGRWERRATLPQAAMGVATVERDGMVYALGGMGPDTAPQAQVRVYEPRRDCWLSLPSMPTPCYGASTFLHGNKIYVLGGRQGKLPVTAFEAFDLEARTWTRHPSLPSRRAFAGCAMAEGSVFSLGGLQQPGPHNFYSRPHFVNTVEMFDLEHGSWTKLPRSLRMRDKRADFVVGSLGGHIVAIGGLGNQPCPLGSVESFSLARRRWEALPAMPTARCSCSSLQAGPRLFVIGGVAQGPSQAVEALCLRDGV.

8 Kelch repeats span residues 1 to 31 (MSAG…HQDG), 32 to 79 (HLLV…VLGK), 81 to 127 (VLVV…ERDG), 128 to 175 (MVYA…LHGN), 176 to 222 (KIYV…MAEG), 224 to 281 (VFSL…SLGG), 282 to 329 (HIVA…QAGP), and 331 to 354 (LFVI…RDGV).

Its subcellular location is the cytoplasm. It localises to the midbody. Involved in pinching off the separated nuclei at the cleavage furrow and in cytokinesis. Required for mitotic integrity and maintenance of chromosomal stability. Protects cells against mitotic errors, centrosomal amplification, micronucleus formation and aneuploidy. Plays a key role of midbody function involving abscission of the daughter cells during cytokinesis and appropriate chromosomal and nuclear segregation into the daughter cells. The polypeptide is Kelch domain-containing protein 8B (Homo sapiens (Human)).